A 284-amino-acid polypeptide reads, in one-letter code: Shikimate dehydrogenase (NADP(+)) (284 aa).

Shikimate contacts are provided by residues 20-22 and Ser67; that span reads SIS. Catalysis depends on Lys71, which acts as the Proton acceptor. Asp83 serves as a coordination point for NADP(+). The shikimate site is built by Asn92 and Asp107. NADP(+) is bound by residues 129–133 and Ile227; that span reads GAGGA. Residue Tyr229 coordinates shikimate. An NADP(+)-binding site is contributed by Gly250.

This sequence belongs to the shikimate dehydrogenase family. Homodimer.

The enzyme catalyses shikimate + NADP(+) = 3-dehydroshikimate + NADPH + H(+). It participates in metabolic intermediate biosynthesis; chorismate biosynthesis; chorismate from D-erythrose 4-phosphate and phosphoenolpyruvate: step 4/7. In terms of biological role, involved in the biosynthesis of the chorismate, which leads to the biosynthesis of aromatic amino acids. Catalyzes the reversible NADPH linked reduction of 3-dehydroshikimate (DHSA) to yield shikimate (SA). This is Shikimate dehydrogenase (NADP(+)) from Streptococcus pneumoniae (strain P1031).